We begin with the raw amino-acid sequence, 363 residues long: Ferrochelatase (363 aa).

H209 and E290 together coordinate Fe cation.

Belongs to the ferrochelatase family.

The protein localises to the cytoplasm. It carries out the reaction heme b + 2 H(+) = protoporphyrin IX + Fe(2+). Its pathway is porphyrin-containing compound metabolism; protoheme biosynthesis; protoheme from protoporphyrin-IX: step 1/1. Its function is as follows. Catalyzes the ferrous insertion into protoporphyrin IX. The chain is Ferrochelatase from Methylibium petroleiphilum (strain ATCC BAA-1232 / LMG 22953 / PM1).